A 299-amino-acid chain; its full sequence is HTH-type transcriptional regulator ArgP (299 aa).

One can recognise an HTH lysR-type domain in the interval 4 to 60 (PDYRTLQALDAVIRERGFERAAQKLCITQSAVSQRIKQLENMFGQPLLVRTVPPRPT). The segment at residues 21–40 (FERAAQKLCITQSAVSQRIK) is a DNA-binding region (H-T-H motif).

Belongs to the LysR transcriptional regulatory family. Homodimer.

Its function is as follows. Controls the transcription of genes involved in arginine and lysine metabolism. This is HTH-type transcriptional regulator ArgP from Erwinia tasmaniensis (strain DSM 17950 / CFBP 7177 / CIP 109463 / NCPPB 4357 / Et1/99).